Consider the following 291-residue polypeptide: Pyridoxal 5'-phosphate synthase subunit PdxS (291 aa).

D23 is a binding site for D-ribose 5-phosphate. K80 (schiff-base intermediate with D-ribose 5-phosphate) is an active-site residue. G152 provides a ligand contact to D-ribose 5-phosphate. D-glyceraldehyde 3-phosphate is bound at residue R164. D-ribose 5-phosphate is bound by residues G213 and G234–S235.

The protein belongs to the PdxS/SNZ family. In terms of assembly, in the presence of PdxT, forms a dodecamer of heterodimers.

The catalysed reaction is aldehydo-D-ribose 5-phosphate + D-glyceraldehyde 3-phosphate + L-glutamine = pyridoxal 5'-phosphate + L-glutamate + phosphate + 3 H2O + H(+). It participates in cofactor biosynthesis; pyridoxal 5'-phosphate biosynthesis. Its function is as follows. Catalyzes the formation of pyridoxal 5'-phosphate from ribose 5-phosphate (RBP), glyceraldehyde 3-phosphate (G3P) and ammonia. The ammonia is provided by the PdxT subunit. Can also use ribulose 5-phosphate and dihydroxyacetone phosphate as substrates, resulting from enzyme-catalyzed isomerization of RBP and G3P, respectively. This Haemophilus influenzae (strain ATCC 51907 / DSM 11121 / KW20 / Rd) protein is Pyridoxal 5'-phosphate synthase subunit PdxS.